The following is a 335-amino-acid chain: Adenine deaminase (335 aa).

Residues His-17, His-19, and His-197 each contribute to the Zn(2+) site. Glu-200 serves as the catalytic Proton donor. Asp-278 lines the Zn(2+) pocket. Asp-279 serves as a coordination point for substrate.

This sequence belongs to the metallo-dependent hydrolases superfamily. Adenosine and AMP deaminases family. Adenine deaminase type 2 subfamily. Zn(2+) serves as cofactor.

The catalysed reaction is adenine + H2O + H(+) = hypoxanthine + NH4(+). Its function is as follows. Catalyzes the hydrolytic deamination of adenine to hypoxanthine. Plays an important role in the purine salvage pathway and in nitrogen catabolism. The polypeptide is Adenine deaminase (Marinomonas sp. (strain MWYL1)).